Here is a 183-residue protein sequence, read N- to C-terminus: Capsid protein (183 aa).

Residues N136–C183 form a disordered region. Basic residues predominate over residues Q151 to S176. The stretch at A155 to P161 is one 1; half-length repeat. A 3 X 8 AA repeats of S-P-R-R-R-[PR]-S-Q region spans residues A155–Q177. The Bipartite nuclear localization signal signature appears at R158 to R175. Phosphoserine; by host occurs at positions 162 and 170. Tandem repeats lie at residues S162–Q169 and S170–Q177. Residues Q177 to C183 form an RNA binding region.

It belongs to the orthohepadnavirus core antigen family. Homodimerizes, then multimerizes. Interacts with cytosol exposed regions of viral L glycoprotein present in the reticulum-to-Golgi compartment. Interacts with human FLNB. Phosphorylated form interacts with host importin alpha; this interaction depends on the exposure of the NLS, which itself depends upon genome maturation and/or phosphorylation of the capsid protein. Interacts with host NUP153. Phosphorylated by host SRPK1, SRPK2, and maybe protein kinase C or GAPDH. Phosphorylation is critical for pregenomic RNA packaging. Protein kinase C phosphorylation is stimulated by HBx protein and may play a role in transport of the viral genome to the nucleus at the late step during the viral replication cycle.

It localises to the virion. The protein localises to the host cytoplasm. In terms of biological role, self assembles to form an icosahedral capsid. Most capsids appear to be large particles with an icosahedral symmetry of T=4 and consist of 240 copies of capsid protein, though a fraction forms smaller T=3 particles consisting of 180 capsid proteins. Entering capsids are transported along microtubules to the nucleus. Phosphorylation of the capsid is thought to induce exposure of nuclear localization signal in the C-terminal portion of the capsid protein that allows binding to the nuclear pore complex via the importin (karyopherin-) alpha and beta. Capsids are imported in intact form through the nuclear pore into the nuclear basket, where it probably binds NUP153. Only capsids that contain the mature viral genome can release the viral DNA and capsid protein into the nucleoplasm. Immature capsids get stuck in the basket. Capsids encapsulate the pre-genomic RNA and the P protein. Pre-genomic RNA is reverse-transcribed into DNA while the capsid is still in the cytoplasm. The capsid can then either be directed to the nucleus, providing more genomes for transcription, or bud through the endoplasmic reticulum to provide new virions. The protein is Capsid protein of Homo sapiens (Human).